A 293-amino-acid polypeptide reads, in one-letter code: Aspartate carbamoyltransferase catalytic subunit (293 aa).

Carbamoyl phosphate-binding residues include R50 and T51. K78 is a binding site for L-aspartate. Carbamoyl phosphate contacts are provided by R100, H127, and Q130. L-aspartate is bound by residues R160 and R210. Carbamoyl phosphate-binding residues include A253 and P254.

The protein belongs to the aspartate/ornithine carbamoyltransferase superfamily. ATCase family. Heterododecamer (2C3:3R2) of six catalytic PyrB chains organized as two trimers (C3), and six regulatory PyrI chains organized as three dimers (R2).

The catalysed reaction is carbamoyl phosphate + L-aspartate = N-carbamoyl-L-aspartate + phosphate + H(+). It participates in pyrimidine metabolism; UMP biosynthesis via de novo pathway; (S)-dihydroorotate from bicarbonate: step 2/3. Functionally, catalyzes the condensation of carbamoyl phosphate and aspartate to form carbamoyl aspartate and inorganic phosphate, the committed step in the de novo pyrimidine nucleotide biosynthesis pathway. The chain is Aspartate carbamoyltransferase catalytic subunit from Staphylococcus epidermidis (strain ATCC 12228 / FDA PCI 1200).